Here is a 383-residue protein sequence, read N- to C-terminus: Succinyl-diaminopimelate desuccinylase (383 aa).

Zn(2+) is bound at residue H79. D81 is an active-site residue. D110 contributes to the Zn(2+) binding site. E141 serves as the catalytic Proton acceptor. 3 residues coordinate Zn(2+): E142, E170, and H355.

It belongs to the peptidase M20A family. DapE subfamily. As to quaternary structure, homodimer. Requires Zn(2+) as cofactor. The cofactor is Co(2+).

It catalyses the reaction N-succinyl-(2S,6S)-2,6-diaminopimelate + H2O = (2S,6S)-2,6-diaminopimelate + succinate. It functions in the pathway amino-acid biosynthesis; L-lysine biosynthesis via DAP pathway; LL-2,6-diaminopimelate from (S)-tetrahydrodipicolinate (succinylase route): step 3/3. In terms of biological role, catalyzes the hydrolysis of N-succinyl-L,L-diaminopimelic acid (SDAP), forming succinate and LL-2,6-diaminopimelate (DAP), an intermediate involved in the bacterial biosynthesis of lysine and meso-diaminopimelic acid, an essential component of bacterial cell walls. In Helicobacter pylori (strain ATCC 700392 / 26695) (Campylobacter pylori), this protein is Succinyl-diaminopimelate desuccinylase.